A 716-amino-acid polypeptide reads, in one-letter code: MAKMRVYEYAKALNVSSKEILTALKNMDLEVNNHMAMLEEKAIKKLDAKYKKGGARAKSQKPAETNKNKQPQGVNQQSAGNQPNKIRDGKKNDVQNNQFNKNKKNNNNKKNKRNNNNNKNQHQQKPVKPKKELPEKITFSGTLTVGALAEELGKEPSELIKKLMLLGVMATINQELDKDTIELIASEYGVETEEVIVLEETELEKYEEPDNEEDLEIRPPVVTIMGHVDHGKTTLLDSIRKTKVVEGEAGGITQHIGAYQIEENGKKITFLDTPGHAAFTTMRARGAEVTDITILVVAADDGVMPQTVEAINHAKAAEVPIIVAVNKIDKESANPDRVMQELTEYGLVPEAWGGETIFVPLSALTGKGIDELVEMILLVSEVEELKANPNRQAKGTVIEAELDKGRGSVATLLVQTGTLHVGDPIVVGNTFGRVRAMVNDIGRRVKTAGPSTPVEITGLNDVPQAGDQFLVFKDEKTARSVGEARASKQLEEQRSDKAKLSLDDLFEQIKQGDVKDINLIVKADVQGSAEALTAALQKIEVEGVKVKIIHTGVGAITESDIILASASNAIVIGFNVRPDGNAKSTAEAENVDIRLHRIIYKVIDEIEAAMKGMLDPEYEEKVIGQVEVRQTFKVSKIGTIAGGYVTEGTITRDSGLRLIRDGVVIFEGEVDVLKRFKDDVKEVSQGYECGITIKKYNDIREGDILEAFVMQEIERT.

A disordered region spans residues 50–136 (YKKGGARAKS…VKPKKELPEK (87 aa)). A compositionally biased stretch (polar residues) spans 62-84 (PAETNKNKQPQGVNQQSAGNQPN). Residues 101 to 113 (KNKKNNNNKKNKR) show a composition bias toward basic residues. Positions 114–126 (NNNNNKNQHQQKP) are enriched in low complexity. The 170-residue stretch at 217–386 (IRPPVVTIMG…LLVSEVEELK (170 aa)) folds into the tr-type G domain. The G1 stretch occupies residues 226-233 (GHVDHGKT). 226–233 (GHVDHGKT) serves as a coordination point for GTP. The tract at residues 251-255 (GITQH) is G2. Residues 272 to 275 (DTPG) form a G3 region. GTP-binding positions include 272-276 (DTPGH) and 326-329 (NKID). The G4 stretch occupies residues 326 to 329 (NKID). Positions 362–364 (SAL) are G5.

Belongs to the TRAFAC class translation factor GTPase superfamily. Classic translation factor GTPase family. IF-2 subfamily.

It localises to the cytoplasm. Its function is as follows. One of the essential components for the initiation of protein synthesis. Protects formylmethionyl-tRNA from spontaneous hydrolysis and promotes its binding to the 30S ribosomal subunits. Also involved in the hydrolysis of GTP during the formation of the 70S ribosomal complex. The chain is Translation initiation factor IF-2 (infB) from Bacillus subtilis (strain 168).